Here is a 285-residue protein sequence, read N- to C-terminus: tRNA pseudouridine synthase B (285 aa).

The active-site Nucleophile is Asp-38.

This sequence belongs to the pseudouridine synthase TruB family. Type 1 subfamily.

The enzyme catalyses uridine(55) in tRNA = pseudouridine(55) in tRNA. Functionally, responsible for synthesis of pseudouridine from uracil-55 in the psi GC loop of transfer RNAs. The chain is tRNA pseudouridine synthase B from Geobacillus kaustophilus (strain HTA426).